The primary structure comprises 252 residues: 3-dehydroquinate dehydratase (252 aa).

Residues Ser21, 46 to 48 (EWR), and Arg82 each bind 3-dehydroquinate. His143 acts as the Proton donor/acceptor in catalysis. Residue Lys170 is the Schiff-base intermediate with substrate of the active site. 3 residues coordinate 3-dehydroquinate: Arg213, Ser232, and Gln236.

Belongs to the type-I 3-dehydroquinase family. As to quaternary structure, homodimer.

It carries out the reaction 3-dehydroquinate = 3-dehydroshikimate + H2O. The protein operates within metabolic intermediate biosynthesis; chorismate biosynthesis; chorismate from D-erythrose 4-phosphate and phosphoenolpyruvate: step 3/7. Its function is as follows. Involved in the third step of the chorismate pathway, which leads to the biosynthesis of aromatic amino acids. Catalyzes the cis-dehydration of 3-dehydroquinate (DHQ) and introduces the first double bond of the aromatic ring to yield 3-dehydroshikimate. The polypeptide is 3-dehydroquinate dehydratase (Escherichia coli O7:K1 (strain IAI39 / ExPEC)).